We begin with the raw amino-acid sequence, 701 residues long: Translation factor GUF1, mitochondrial (701 aa).

The transit peptide at 1-29 (MSCCKGLTPQCVRVRLPRRPALSHPARLY) directs the protein to the mitochondrion. A compositionally biased stretch (low complexity) spans 23–50 (SHPARLYSSSSSSNSHSSPSRPRLLSRP). The tract at residues 23–85 (SHPARLYSSS…RSSHHSSAPM (63 aa)) is disordered. Positions 98–283 (ERYRNFCVIA…AVIEQIPHPT (186 aa)) constitute a tr-type G domain. Residues 107–114 (AHVDHGKS), 172–176 (DTPGH), and 226–229 (NKID) contribute to the GTP site.

This sequence belongs to the TRAFAC class translation factor GTPase superfamily. Classic translation factor GTPase family. LepA subfamily.

The protein localises to the mitochondrion inner membrane. It catalyses the reaction GTP + H2O = GDP + phosphate + H(+). In terms of biological role, promotes mitochondrial protein synthesis. May act as a fidelity factor of the translation reaction, by catalyzing a one-codon backward translocation of tRNAs on improperly translocated ribosomes. Binds to mitochondrial ribosomes in a GTP-dependent manner. In Pyricularia oryzae (strain 70-15 / ATCC MYA-4617 / FGSC 8958) (Rice blast fungus), this protein is Translation factor GUF1, mitochondrial.